The primary structure comprises 264 residues: MSSSAPIGVFDSGLGGISVARQIAKDMPAEHVLYFGDSANAPYGIKTPEQVRALSFDIVERFVRQGVKAVVIACNTATSAAVNDLREHYDIPIIGMEPALKVACDRGDVPSDPHHIPQRVIVAATPLTLRERKFATLMDRFDSQNTIFKEPCPDLVEIVESGRLGDHDLVMRTLHGYFDQYDMEHIDSVVLGCTHFVFYRDYFRELLPERAAVIDGNEGTVRHLGVVLESLGKLAPEGATGGVELANSDPSERIAELSRKLLNV.

Substrate contacts are provided by residues Asp11–Ser12 and Tyr43–Gly44. Catalysis depends on Cys74, which acts as the Proton donor/acceptor. Asn75–Thr76 is a binding site for substrate. Residue Cys193 is the Proton donor/acceptor of the active site. A substrate-binding site is contributed by Thr194 to His195.

This sequence belongs to the aspartate/glutamate racemases family.

The catalysed reaction is L-glutamate = D-glutamate. It functions in the pathway cell wall biogenesis; peptidoglycan biosynthesis. In terms of biological role, provides the (R)-glutamate required for cell wall biosynthesis. The chain is Glutamate racemase from Bifidobacterium longum subsp. infantis (strain ATCC 15697 / DSM 20088 / JCM 1222 / NCTC 11817 / S12).